The sequence spans 146 residues: MVMGLHLLLLVFILGLGLTPPTLAQNDIRYIKFLDQHYDPKTKNGNDKYCEKMMRLRNMISPCKEINTFIHGNKASIKAICGNQNGEPHNGNQRISKSAFQVTICRHIGGSPRPPCRYRATAGFRNLVVACENDLPVHLDESIFRP.

An N-terminal signal peptide occupies residues 1–24 (MVMGLHLLLLVFILGLGLTPPTLA). Position 25 is a pyrrolidone carboxylic acid (Gln-25). The Proton acceptor role is filled by His-37. 3 cysteine pairs are disulfide-bonded: Cys-50–Cys-105, Cys-63–Cys-116, and Cys-81–Cys-131. The Nucleolar localization signal signature appears at 55–59 (RLRNM). TRNA is bound at residue Cys-105. His-138 acts as the Proton donor in catalysis.

Belongs to the pancreatic ribonuclease family. As to quaternary structure, homodimer. Interacts with RNH1; inhibiting ANG ribonuclease activity. Interacts with PCNA.

It localises to the secreted. Its subcellular location is the nucleus. The protein localises to the nucleolus. The protein resides in the cytoplasm. It is found in the stress granule. Has weak tRNA ribonuclease activity by itself due to partial autoinhibition by its C-terminus, which folds into a short alpha-helix that partially occludes the substrate-binding site. In absence of stress, the ribonuclease activity is inhibited by RNH1 in the cytoplasm. In response to stress, dissociates from RNH1 in the cytoplasm and associates with cytoplasmic ribosomes with vacant A-sites: ribosomes directly activate the tRNA ribonuclease activity of ANG by refolding the C-terminal alpha-helix. In response to stress, the angiogenic activity of ANG is inhibited by RNH1 in the nucleus. Its function is as follows. Secreted ribonuclease that can either promote or restrict cell proliferation of target cells, depending on the context. Endocytosed in target cells via its receptor PLXNB2 and translocates to the cytoplasm or nucleus. Under stress conditions, localizes to the cytoplasm and promotes the assembly of stress granules (SGs): specifically cleaves a subset of tRNAs within anticodon loops to produce tRNA-derived stress-induced fragments (tiRNAs), resulting in translation repression and inhibition of cell proliferation. tiRNas also prevent formation of apoptosome, thereby promoting cell survival. Preferentially cleaves RNAs between a pyrimidine and an adenosine residue, suggesting that it cleaves the anticodon loop of tRNA(Ala) (32-UUAGCAU-38) after positions 33 and 36. Cleaves a subset of tRNAs, including tRNA(Ala), tRNA(Glu), tRNA(Gly), tRNA(Lys), tRNA(Val), tRNA(His), tRNA(Asp) and tRNA(Sec). Under growth conditions and in differentiated cells, translocates to the nucleus and stimulates ribosomal RNA (rRNA) transcription, including that containing the initiation site sequences of 45S rRNA, thereby promoting cell growth and proliferation. Angiogenin induces vascularization of normal and malignant tissues via its ability to promote rRNA transcription. Involved in hematopoietic stem and progenitor cell (HSPC) growth and survival by promoting rRNA transcription in growth conditions and inhibiting translation in response to stress, respectively. Mediates the crosstalk between myeloid and intestinal epithelial cells to protect the intestinal epithelial barrier integrity: secreted by myeloid cells and promotes intestinal epithelial cells proliferation and survival. Also mediates osteoclast-endothelial cell crosstalk in growing bone: produced by osteoclasts and protects the neighboring vascular cells against senescence by promoting rRNA transcription. In Aotus trivirgatus (Three-striped night monkey), this protein is Angiogenin (ANG).